The sequence spans 293 residues: Probable metal transport system membrane protein CPn_0543/CP_0209/CPj0543/CpB0565 (293 aa).

7 consecutive transmembrane segments (helical) span residues 12–32 (LLIL…GGVM), 41–61 (IVSI…LTLW), 68–88 (LSFF…LCIG), 101–121 (LIAM…SRLP), 140–160 (PSDL…VVLC), 183–203 (LWYF…IYVM), and 253–273 (FPVG…SLCV).

It belongs to the ABC-3 integral membrane protein family.

Its subcellular location is the cell inner membrane. In terms of biological role, part of an ATP-driven transport system CPn_0541/CPn_0542/CPn_0543 for a metal. The polypeptide is Probable metal transport system membrane protein CPn_0543/CP_0209/CPj0543/CpB0565 (Chlamydia pneumoniae (Chlamydophila pneumoniae)).